Consider the following 384-residue polypeptide: Bifunctional enzyme IspD/IspF (384 aa).

2-C-methyl-D-erythritol 4-phosphate cytidylyltransferase regions lie at residues 1–227 (MAKV…EGEQ) and 1–228 (MAKV…GEQR). The tract at residues 228 to 384 (RIGSGFDVHR…QATALITLPF (157 aa)) is 2-C-methyl-D-erythritol 2,4-cyclodiphosphate synthase. Residues aspartate 234 and histidine 236 each contribute to the a divalent metal cation site. Residues 234–236 (DVH) and 260–261 (HS) contribute to the 4-CDP-2-C-methyl-D-erythritol 2-phosphate site. Position 268 (histidine 268) interacts with a divalent metal cation. 4-CDP-2-C-methyl-D-erythritol 2-phosphate contacts are provided by residues 282-284 (DIG), 358-361 (TTTE), phenylalanine 365, and arginine 368.

This sequence in the N-terminal section; belongs to the IspD/TarI cytidylyltransferase family. IspD subfamily. In the C-terminal section; belongs to the IspF family. A divalent metal cation serves as cofactor.

It catalyses the reaction 2-C-methyl-D-erythritol 4-phosphate + CTP + H(+) = 4-CDP-2-C-methyl-D-erythritol + diphosphate. The enzyme catalyses 4-CDP-2-C-methyl-D-erythritol 2-phosphate = 2-C-methyl-D-erythritol 2,4-cyclic diphosphate + CMP. The protein operates within isoprenoid biosynthesis; isopentenyl diphosphate biosynthesis via DXP pathway; isopentenyl diphosphate from 1-deoxy-D-xylulose 5-phosphate: step 2/6. It participates in isoprenoid biosynthesis; isopentenyl diphosphate biosynthesis via DXP pathway; isopentenyl diphosphate from 1-deoxy-D-xylulose 5-phosphate: step 4/6. Its function is as follows. Bifunctional enzyme that catalyzes the formation of 4-diphosphocytidyl-2-C-methyl-D-erythritol from CTP and 2-C-methyl-D-erythritol 4-phosphate (MEP) (IspD), and catalyzes the conversion of 4-diphosphocytidyl-2-C-methyl-D-erythritol 2-phosphate (CDP-ME2P) to 2-C-methyl-D-erythritol 2,4-cyclodiphosphate (ME-CPP) with a corresponding release of cytidine 5-monophosphate (CMP) (IspF). The polypeptide is Bifunctional enzyme IspD/IspF (Rhodospirillum rubrum (strain ATCC 11170 / ATH 1.1.1 / DSM 467 / LMG 4362 / NCIMB 8255 / S1)).